The sequence spans 479 residues: MFS-type transporter lnaF (479 aa).

11 helical membrane-spanning segments follow: residues 47–67 (WIYL…GFTP), 71–91 (GLII…SGAI), 104–124 (LLCI…GPLI), 136–156 (WCFY…VFLL), 177–197 (LVGL…LSWG), 208–228 (IIGL…VQWW), 250–270 (IFSF…PIWF), 283–303 (LMSI…AVLV), 306–326 (IGFY…GAGL), 344–364 (IPFG…VQAV), and 372–392 (LAIA…ISVA). Asn-416 is a glycosylation site (N-linked (GlcNAc...) asparagine). Residues 442 to 462 (LAITQALYVGVALSSLAIVGA) form a helical membrane-spanning segment.

This sequence belongs to the major facilitator superfamily. TCR/Tet family.

It localises to the cell membrane. In terms of biological role, MFS-type transporter; part of the lnb gene cluster that mediates the biosynthesis of diastereomeric piperazines. Lna and lnb clusters encode sets of enzymes that produce overlapping sets of previously undescribed metabolites such as piperazinomycin-like metabolites or morpholine. The lna and lnb biosynthetic pathways appear to be part of a signaling network that controls the formation of sclerotia, a resilient overwintering structure. May be involved in the secretion of the metabolites produced by the lna and lnb clusters. This chain is MFS-type transporter lnaF, found in Aspergillus flavus (strain ATCC 200026 / FGSC A1120 / IAM 13836 / NRRL 3357 / JCM 12722 / SRRC 167).